Reading from the N-terminus, the 199-residue chain is NAD(P)H dehydrogenase (quinone) (199 aa).

Positions 4-190 (VLVLYYSTYG…AGARHQGELV (187 aa)) constitute a Flavodoxin-like domain. FMN contacts are provided by residues 10 to 15 (STYGHL) and 78 to 80 (TRF). Tyr12 provides a ligand contact to NAD(+). Trp98 provides a ligand contact to substrate. FMN-binding positions include 113-119 (STATQHG) and His134.

The protein belongs to the WrbA family. It depends on FMN as a cofactor.

It catalyses the reaction a quinone + NADH + H(+) = a quinol + NAD(+). It carries out the reaction a quinone + NADPH + H(+) = a quinol + NADP(+). This is NAD(P)H dehydrogenase (quinone) from Azorhizobium caulinodans (strain ATCC 43989 / DSM 5975 / JCM 20966 / LMG 6465 / NBRC 14845 / NCIMB 13405 / ORS 571).